A 314-amino-acid chain; its full sequence is MTKFEIECVESTTDGARDHYSKFCLEPLEQGQGVTLGNALRRTLLSDLEGTAIVAVRIAGVSHEFSTIPGIREDVLEILLNLKEVVLKSQTKNPSVGRLRVQGPAIVTTSNLELPSEVELIDPNQYIATICGNNILEMEFRIETGKGYHLIERSIDETSIDFLQVDAIFMPVKKVNYLTKDIRSNDNLLQEQLLLEVWTNGSIDPQDAVSQGGKILTELLHPLKEINFKSDEEDTVAEDSKINQILIEELQLSVRAYNCLKRAQIHSVADLLDYSQEDLIEIKNFGQKSAEEVIDALQKRLGINLPKEKTVKPN.

The alpha N-terminal domain (alpha-NTD) stretch occupies residues 1 to 227 (MTKFEIECVE…ELLHPLKEIN (227 aa)). Residues 241–314 (KINQILIEEL…LPKEKTVKPN (74 aa)) are alpha C-terminal domain (alpha-CTD).

It belongs to the RNA polymerase alpha chain family. In plastids the minimal PEP RNA polymerase catalytic core is composed of four subunits: alpha, beta, beta', and beta''. When a (nuclear-encoded) sigma factor is associated with the core the holoenzyme is formed, which can initiate transcription.

It localises to the plastid. Its subcellular location is the chloroplast. The catalysed reaction is RNA(n) + a ribonucleoside 5'-triphosphate = RNA(n+1) + diphosphate. Functionally, DNA-dependent RNA polymerase catalyzes the transcription of DNA into RNA using the four ribonucleoside triphosphates as substrates. The polypeptide is DNA-directed RNA polymerase subunit alpha (Rhodomonas salina (Cryptomonas salina)).